A 240-amino-acid chain; its full sequence is Guanine nucleotide exchange factor sopE2 (240 aa).

Residues 78–240 (LTSKTVKDFM…IANKYLQNAS (163 aa)) form a GEF catalytic domain region.

The protein belongs to the GEF (guanine exchange factor) SopE family.

The protein resides in the secreted. Activator for CDC42 by directly engaging this Rho GTPase and acting as potent guanine nucleotide exchange factor (GEF). This activation results in actin cytoskeleton rearrangements and stimulates membrane ruffling, promoting bacterial entry into non-phagocytic cells. Chaperone InvB is required for secretion, translocation and stabilization of intracellular levels of sopE2. In Salmonella paratyphi A (strain ATCC 9150 / SARB42), this protein is Guanine nucleotide exchange factor sopE2 (sopE2).